Consider the following 651-residue polypeptide: Acetyl-coenzyme A synthetase (651 aa).

CoA-binding positions include 190–193 (RGGR), Thr309, and Asn333. ATP is bound by residues 385-387 (GEP), 409-414 (DTWWQT), Asp498, and Arg513. Ser521 contributes to the CoA binding site. Arg524 serves as a coordination point for ATP. Mg(2+) is bound by residues Val535, His537, and Val540. Arg582 is a binding site for CoA. Residue Lys607 is modified to N6-acetyllysine.

The protein belongs to the ATP-dependent AMP-binding enzyme family. The cofactor is Mg(2+). Post-translationally, acetylated. Deacetylation by the SIR2-homolog deacetylase activates the enzyme.

It catalyses the reaction acetate + ATP + CoA = acetyl-CoA + AMP + diphosphate. Its function is as follows. Catalyzes the conversion of acetate into acetyl-CoA (AcCoA), an essential intermediate at the junction of anabolic and catabolic pathways. AcsA undergoes a two-step reaction. In the first half reaction, AcsA combines acetate with ATP to form acetyl-adenylate (AcAMP) intermediate. In the second half reaction, it can then transfer the acetyl group from AcAMP to the sulfhydryl group of CoA, forming the product AcCoA. This is Acetyl-coenzyme A synthetase from Xanthobacter autotrophicus (strain ATCC BAA-1158 / Py2).